The sequence spans 707 residues: Methionine--tRNA ligase (707 aa).

Residues 13 to 23 carry the 'HIGH' region motif; it reads PYANGNFHIGH. Residues Cys147, Cys150, Cys160, and Cys163 each coordinate Zn(2+). Residues 344–348 carry the 'KMSKS' region motif; the sequence is KMSKS. An ATP-binding site is contributed by Lys347. Residues 601 to 707 form the tRNA-binding domain; it reads DFAKVDLRIA…PGATPGMRIH (107 aa).

It belongs to the class-I aminoacyl-tRNA synthetase family. MetG type 1 subfamily. As to quaternary structure, homodimer. The cofactor is Zn(2+).

It localises to the cytoplasm. The enzyme catalyses tRNA(Met) + L-methionine + ATP = L-methionyl-tRNA(Met) + AMP + diphosphate. In terms of biological role, is required not only for elongation of protein synthesis but also for the initiation of all mRNA translation through initiator tRNA(fMet) aminoacylation. The sequence is that of Methionine--tRNA ligase from Polaromonas naphthalenivorans (strain CJ2).